Consider the following 546-residue polypeptide: MTTRYIFVTGGVVSSLGKGIAAASLAAILEARGLNVTIMKLDPYINVDPGTMSPTQHGEVFVTEDGAETDLDLGHYERFIRTKMNRRNNFTTGRIYEEVLRKERRGDYLGATIQVIPHITNAIKEKVLAGGEGHDVAIVEIGGTVGDIESLPFLESIRQLGVELGRDRTLFMHLTLVPFLGAAGEVKTKPTQHSVKELRSIGIAPDVLVCRGDRAIPANEKAKISLFCNVEERAVISLKDVDSIYKIPALLKAQGLDQLVTKRFGIDCKEADLAEWEKVVYQEANPVGEVTIGMVGKYIELPDAYKSVNEALKHAGLFNRVSVNIKYIDSQNVEAKGDEVLQGLDGILVPGGFGERGVEGKIMAAKFARENNLPYFGICLGMQVALIEFARHVAGLEGAHSTEFKPETPHPVVGLITEWINEDGQVEERHEESDLGGTMRLGAQLCHLEEGTKAAAAYKSTTCVERHRHRYEVNNNYKERLEKAGLIFSGLSSDRSLVEMIELPNHPWFVAGQFHPEFTSTPRDGQPLFEGFVAAAAAYQKRDLED.

The interval 1-266 (MTTRYIFVTG…DQLVTKRFGI (266 aa)) is amidoligase domain. CTP is bound at residue Ser14. Ser14 serves as a coordination point for UTP. ATP is bound by residues 15 to 20 (SLGKGI) and Asp72. Mg(2+) is bound by residues Asp72 and Glu140. Residues 147–149 (DIE), 187–192 (KTKPTQ), and Lys223 each bind CTP. UTP-binding positions include 187–192 (KTKPTQ) and Lys223. Residue 239-241 (KDV) coordinates ATP. Residues 291 to 542 (TIGMVGKYIE…VAAAAAYQKR (252 aa)) enclose the Glutamine amidotransferase type-1 domain. Gly352 contacts L-glutamine. The active-site Nucleophile; for glutamine hydrolysis is the Cys379. Residues 380–383 (LGMQ), Glu403, and Arg470 each bind L-glutamine. Residues His515 and Glu517 contribute to the active site.

The protein belongs to the CTP synthase family. As to quaternary structure, homotetramer.

The catalysed reaction is UTP + L-glutamine + ATP + H2O = CTP + L-glutamate + ADP + phosphate + 2 H(+). It catalyses the reaction L-glutamine + H2O = L-glutamate + NH4(+). The enzyme catalyses UTP + NH4(+) + ATP = CTP + ADP + phosphate + 2 H(+). It functions in the pathway pyrimidine metabolism; CTP biosynthesis via de novo pathway; CTP from UDP: step 2/2. With respect to regulation, allosterically activated by GTP, when glutamine is the substrate; GTP has no effect on the reaction when ammonia is the substrate. The allosteric effector GTP functions by stabilizing the protein conformation that binds the tetrahedral intermediate(s) formed during glutamine hydrolysis. Inhibited by the product CTP, via allosteric rather than competitive inhibition. Functionally, catalyzes the ATP-dependent amination of UTP to CTP with either L-glutamine or ammonia as the source of nitrogen. Regulates intracellular CTP levels through interactions with the four ribonucleotide triphosphates. This chain is CTP synthase, found in Shewanella pealeana (strain ATCC 700345 / ANG-SQ1).